The following is a 961-amino-acid chain: Translation initiation factor IF-2 (961 aa).

Polar residues predominate over residues 146–158 (PSVPNKTLTTTPH). The interval 146–373 (PSVPNKTLTT…KTTSQVTTQP (228 aa)) is disordered. Over residues 163-176 (NHSEKDVLESHDSS) the composition is skewed to basic and acidic residues. The span at 177-187 (NKNIKQSSSQN) shows a compositional bias: low complexity. Positions 230–239 (SEEKNVDIQQ) are enriched in basic and acidic residues. Polar residues-rich tracts occupy residues 241–285 (EIPS…TAPH) and 301–310 (YQGQNRNNFI). Residues 355 to 364 (NRGRKRHKQK) are compositionally biased toward basic residues. Positions 460–627 (RRPPVVTIMG…LLALQTDILE (168 aa)) constitute a tr-type G domain. The tract at residues 469–476 (GHVDHGKT) is G1. 469–476 (GHVDHGKT) lines the GTP pocket. The segment at 494–498 (GITQH) is G2. The G3 stretch occupies residues 515-518 (DTPG). Residues 515-519 (DTPGH) and 569-572 (NKMD) contribute to the GTP site. The interval 569 to 572 (NKMD) is G4. The interval 605–607 (SAK) is G5.

Belongs to the TRAFAC class translation factor GTPase superfamily. Classic translation factor GTPase family. IF-2 subfamily.

It localises to the cytoplasm. In terms of biological role, one of the essential components for the initiation of protein synthesis. Protects formylmethionyl-tRNA from spontaneous hydrolysis and promotes its binding to the 30S ribosomal subunits. Also involved in the hydrolysis of GTP during the formation of the 70S ribosomal complex. This chain is Translation initiation factor IF-2, found in Lawsonia intracellularis (strain PHE/MN1-00).